The chain runs to 267 residues: Tryptophan synthase alpha chain (267 aa).

Active-site proton acceptor residues include E43 and D54.

Belongs to the TrpA family. As to quaternary structure, tetramer of two alpha and two beta chains.

It catalyses the reaction (1S,2R)-1-C-(indol-3-yl)glycerol 3-phosphate + L-serine = D-glyceraldehyde 3-phosphate + L-tryptophan + H2O. It participates in amino-acid biosynthesis; L-tryptophan biosynthesis; L-tryptophan from chorismate: step 5/5. In terms of biological role, the alpha subunit is responsible for the aldol cleavage of indoleglycerol phosphate to indole and glyceraldehyde 3-phosphate. In Bacillus pumilus (strain SAFR-032), this protein is Tryptophan synthase alpha chain.